The chain runs to 388 residues: MRSDLLPASGTYADIPIGEVLTEAGASIPETSLRLYAFYDAAEQAAVPTPPEERPIVLIEHALTGDGNAADWWADMVGVGKPIDTAKYLVLCANALGGCAGSTGPSSLHPEGGFWGSRFPGLSIRDLVQAEKQLLDVLEIPRVHVIIGASMGGARTLEWSLLYPEMMDAILPIAVSARASAWQIGIQSAQIRVIEADPLWHGGDYYEAGMGPVWGLGEARRIAHLTYRGELEVDERFGAEPQQGENPLGKFRSPDQRFSVEGYLDRQAMKLRNRFDAGSYVTLTDALNRHDLGRDRGGMNAALGNSTVPTMVCGIDTDILYPYHQQEHLSRNLGTFLGLSQITSPTGHDGFLIEARQMGNVLEKFLVTAEKLAKDPEQRANILQQHHH.

In terms of domain architecture, AB hydrolase-1 spans 55 to 354; that stretch reads PIVLIEHALT…PTGHDGFLIE (300 aa). S150 serves as the catalytic Nucleophile. Residue R220 coordinates substrate. Residues D318 and H348 contribute to the active site. D349 is a substrate binding site.

The protein belongs to the AB hydrolase superfamily. MetX family. As to quaternary structure, homodimer.

The protein resides in the cytoplasm. It catalyses the reaction L-homoserine + acetyl-CoA = O-acetyl-L-homoserine + CoA. It functions in the pathway amino-acid biosynthesis; L-methionine biosynthesis via de novo pathway; O-acetyl-L-homoserine from L-homoserine: step 1/1. Transfers an acetyl group from acetyl-CoA to L-homoserine, forming acetyl-L-homoserine. The chain is Homoserine O-acetyltransferase from Corynebacterium urealyticum (strain ATCC 43042 / DSM 7109).